The chain runs to 141 residues: Galactose-6-phosphate isomerase subunit LacA 1 (141 aa).

Belongs to the LacAB/RpiB family. Heteromultimeric protein consisting of LacA and LacB.

The catalysed reaction is aldehydo-D-galactose 6-phosphate = keto-D-tagatose 6-phosphate. Its pathway is carbohydrate metabolism; D-galactose 6-phosphate degradation; D-tagatose 6-phosphate from D-galactose 6-phosphate: step 1/1. This is Galactose-6-phosphate isomerase subunit LacA 1 from Streptococcus pyogenes serotype M18 (strain MGAS8232).